Here is a 105-residue protein sequence, read N- to C-terminus: Large ribosomal subunit protein eL36 (105 aa).

The segment at 1 to 36 (MAQERSGIAVGLNKGHKTTPLNTPKTRISRSKGKAS) is disordered. The span at 27 to 36 (RISRSKGKAS) shows a compositional bias: basic residues.

Belongs to the eukaryotic ribosomal protein eL36 family. Component of the large ribosomal subunit (LSU).

The protein resides in the cytoplasm. In terms of biological role, component of the ribosome, a large ribonucleoprotein complex responsible for the synthesis of proteins in the cell. The small ribosomal subunit (SSU) binds messenger RNAs (mRNAs) and translates the encoded message by selecting cognate aminoacyl-transfer RNA (tRNA) molecules. The large subunit (LSU) contains the ribosomal catalytic site termed the peptidyl transferase center (PTC), which catalyzes the formation of peptide bonds, thereby polymerizing the amino acids delivered by tRNAs into a polypeptide chain. The nascent polypeptides leave the ribosome through a tunnel in the LSU and interact with protein factors that function in enzymatic processing, targeting, and the membrane insertion of nascent chains at the exit of the ribosomal tunnel. The polypeptide is Large ribosomal subunit protein eL36 (Emericella nidulans (strain FGSC A4 / ATCC 38163 / CBS 112.46 / NRRL 194 / M139) (Aspergillus nidulans)).